A 464-amino-acid polypeptide reads, in one-letter code: F-box/FBD/LRR-repeat protein At1g80470 (464 aa).

Positions 15 to 62 constitute an F-box domain; sequence DWISGLADDLLLQILSKVPTRESVFTSRMSKRWRNLWRHVPALDLDSS. 6 LRR repeats span residues 96-122, 123-150, 152-178, 197-222, 223-249, and 273-298; these read EEHC…TILS, KVNI…TLYS, VFDA…KFDG, IITH…KLES, MRED…SITD, and DAED…TISA. The region spanning 359–413 is the FBD domain; sequence KEEINLSLVPHCFESSLEYVQLKVPITVSETSSKMELAIYFVRNCSVLKKLMLNE.

In Arabidopsis thaliana (Mouse-ear cress), this protein is F-box/FBD/LRR-repeat protein At1g80470.